The following is a 1002-amino-acid chain: DNA-directed RNA polymerase 1, mitochondrial (1002 aa).

A mitochondrion-targeting transit peptide spans 1-21 (MWRYISKQAYSRKFRNSHDSA). Active-site residues include aspartate 703, lysine 778, and aspartate 935.

This sequence belongs to the phage and mitochondrial RNA polymerase family. In terms of tissue distribution, the highest levels of expression are detected in the mature leaves. The level of expression is lowest in the cotyledons.

It localises to the mitochondrion. The enzyme catalyses RNA(n) + a ribonucleoside 5'-triphosphate = RNA(n+1) + diphosphate. In terms of biological role, DNA-dependent RNA polymerase catalyzes the transcription of DNA into RNA using the four ribonucleoside triphosphates as substrates. The sequence is that of DNA-directed RNA polymerase 1, mitochondrial (RPOT1) from Nicotiana sylvestris (Wood tobacco).